The chain runs to 446 residues: MNQHYSETRKIDPSRGATLGDNTPNDNNRIEIGPTQLAFGEWATAGLALPDLQRMREFRWNRLTQAVVDRDYGGVLMFDPLNIRYATDSTNMQLWNAHNPFRALLVCADGYMVIWDYKNSPFLSTFNPLVREQRFGADLFYFDRGDKVDVAADAFSNEVRTLIAEHGGGNMRLAVDKIMLHGLRALEAQGFEIMEGEELTEKTRAIKGPDEILAMRCAVHACETSVAAMEHFAREAVPQGNTSEDDVWAVLHAENIKRGGEWIETRLLASGPRTNPWFQECGPRIIQNNEIISFDTDLIGSYGICVDISRSWWVGDAAPPADMVYAMQHAHEHIMTNMEMLKPGVTIPELSERSHRLDEQFQAQKYGCLMHGVGLCDEWPLVAYPDQAVPGSYDYPLEPGMVLCVEAAVGAVGGNFTIKLEDQVLITETGYENLTSYPFDPALMGR.

Basic and acidic residues predominate over residues 1 to 13 (MNQHYSETRKIDP). The interval 1–30 (MNQHYSETRKIDPSRGATLGDNTPNDNNRI) is disordered. The a divalent metal cation site is built by D295, D297, D307, H371, E406, and E421.

This sequence belongs to the peptidase M24B family. As to quaternary structure, homodimer. A divalent metal cation serves as cofactor.

It catalyses the reaction S,S-dimethyl-beta-propiothetin = acrylate + dimethyl sulfide + H(+). Able to cleave dimethylsulfoniopropionate (DMSP), releasing dimethyl sulfide (DMS). DMS is the principal form by which sulfur is transported from oceans to the atmosphere. The real activity of the protein is however subject to debate and it is unclear whether it constitutes a real dimethylsulfoniopropionate lyase in vivo: the low activity with DMSP as substrate suggests that DMSP is not its native substrate. The chain is Dimethylsulfoniopropionate lyase DddP from Roseovarius nubinhibens (strain ATCC BAA-591 / DSM 15170 / ISM).